Reading from the N-terminus, the 636-residue chain is MSKVIGIDLGTTNSCVAIMEGGEPIVIANSEGSRTTPSIVAFADNGERLVGQQAKRQAVTNPENTLYAIKRLIGRKFDTEAVKRDIAISPFKIVKADNNDAWVEARGKRYSPPEISAFVLQKMKQTAEDYLGQTVTDAVITVPAYFDDSQRQATKDAGKIAGLNVLRIINEPTAAALAYGLDKKKEEKVAVFDLGGGTFDISILELGDGVFEVKSTNGDTFLGGEDFDQLVIDWIADEFHKDQGINLRGDKMALQRLKEAAEKAKCELSSSMETDINLPFITADASGPKHLTMKLSRAKLETICGELLAKLEGPCRTAMKDAGLSASDIDEVILVGGMTRMPAVQKKVEAIFGKTPNRGVNPDEVVAIGAGIQGGVLKGDVKDVLLLDVTPLSLGIETLGGVMTKLIEKNTTIPCRKSQVFSTAADNQPAVSIHVLQGEREMSRDNKTLGNFELTGIPPAPRGIPQVEVTFDIDANGIVHVSAKDLGTGKEQSIRITASSGLSKEEIDKMVRDAESHADEDKKKRDAIEARNHADSMVYSTEKSLKEFGDKIDAVEKGNIENKIVELKKVMDGEDAEAIKKATDELAQAAHKLAEAMYAAKEQPGEHGETGSGEQARKESGKDENVVDADFEEVKK.

At Thr198 the chain carries Phosphothreonine; by autocatalysis. The disordered stretch occupies residues 598-636 (YAAKEQPGEHGETGSGEQARKESGKDENVVDADFEEVKK). A compositionally biased stretch (basic and acidic residues) spans 603 to 625 (QPGEHGETGSGEQARKESGKDEN). Over residues 626 to 636 (VVDADFEEVKK) the composition is skewed to acidic residues.

Belongs to the heat shock protein 70 family.

In terms of biological role, acts as a chaperone. This is Chaperone protein DnaK from Pelobacter propionicus (strain DSM 2379 / NBRC 103807 / OttBd1).